Here is a 443-residue protein sequence, read N- to C-terminus: Histone deacetylase 10, chloroplastic (443 aa).

The N-terminal 65 residues, 1-65 (MEQLWVPSLP…PSHNGTSISD (65 aa)), are a transit peptide targeting the chloroplast. Positions 82 to 412 (DAHILYCTSP…FRAFLGEPSL (331 aa)) are histone deacetylase. Residue histidine 222 is the Proton donor/acceptor of the active site. Positions 259, 261, and 346 each coordinate Zn(2+).

It belongs to the histone deacetylase family. Zn(2+) serves as cofactor. As to expression, expressed in leaves. Expressed in coleoptiles, leaves, flag leaves and flowers. Expressed at low levels in roots.

It is found in the plastid. Its subcellular location is the chloroplast. It localises to the mitochondrion. It catalyses the reaction N-acetylserotonin + H2O = serotonin + acetate. The catalysed reaction is N-acetyltyramine + H2O = tyramine + acetate. It carries out the reaction N-acetyltryptamine + H2O = tryptamine + acetate. The enzyme catalyses melatonin + H2O = 5-methoxytryptamine + acetate. The activity of this enzyme is not inhibited by butyrate, a well-known histone deacetylase inhibitor. Its function is as follows. Involved in the regulation of melatonin biosynthesis by catalyzing the deacetylation of N-acetylserotonin to produce serotonin. N-acetylserotonin is methylated by acetylserotonin O-methyltransferase (ASMT) to produce melatonin (N-acetyl-5-methoxytryptamine). Deacetylates melatonin to produce 5-methoxytryptamine. In vitro, deacetylates N-acetyltyramine and N-acetyltryptamine to produce tyramine and tryptamine, respectively. This Oryza sativa subsp. japonica (Rice) protein is Histone deacetylase 10, chloroplastic.